A 331-amino-acid polypeptide reads, in one-letter code: Probable protein phosphatase 2C 1 (331 aa).

Positions 1 to 29 (MAASSTATRLSPPRLHAPTTPSPHLPLRR) are disordered. The region spanning 48-292 (THLIPHPRKA…DDITVIVAQV (245 aa)) is the PPM-type phosphatase domain. Mn(2+) is bound by residues aspartate 79, glycine 80, aspartate 210, and aspartate 283. The segment at 300-331 (DEGVDEEKGQGDEQGSAVAVASSEQKEDSITT) is disordered.

Belongs to the PP2C family. Mg(2+) is required as a cofactor. Requires Mn(2+) as cofactor.

The catalysed reaction is O-phospho-L-seryl-[protein] + H2O = L-seryl-[protein] + phosphate. It catalyses the reaction O-phospho-L-threonyl-[protein] + H2O = L-threonyl-[protein] + phosphate. This is Probable protein phosphatase 2C 1 from Oryza sativa subsp. japonica (Rice).